A 426-amino-acid polypeptide reads, in one-letter code: Vacuole membrane protein hfl11 (426 aa).

5 helical membrane-spanning segments follow: residues 39 to 59 (SVVR…LSVY), 73 to 93 (IYEA…LGGE), 133 to 153 (GILQ…LTKV), 172 to 192 (IGLV…TFWV), and 223 to 243 (VLSI…YSLL). Ser-364 is subject to Phosphoserine. The interval 386–409 (LQFEIDDEMEPLYNQAKQMRYGDY) is ATG8-interacting region.

This sequence belongs to the TMEM184 family. Interacts with atg8.

The protein localises to the vacuole membrane. Its function is as follows. Vacuole membrane protein that recruits ATG8 to facilitate the degradation of vacuolar integral membrane proteins during early-stationary vacuole turnover (EVT) when cells enter stationary phase. This is Vacuole membrane protein hfl11 from Schizosaccharomyces pombe (strain 972 / ATCC 24843) (Fission yeast).